We begin with the raw amino-acid sequence, 1295 residues long: DNA-directed RNA polymerase subunit beta' (1295 aa).

The Zn(2+) site is built by Cys60, Cys62, Cys75, and Cys78. Mg(2+) is bound by residues Asp516, Asp518, and Asp520. The Zn(2+) site is built by Cys841, Cys914, Cys921, and Cys924.

It belongs to the RNA polymerase beta' chain family. As to quaternary structure, the RNAP catalytic core consists of 2 alpha, 1 beta, 1 beta' and 1 omega subunit. When a sigma factor is associated with the core the holoenzyme is formed, which can initiate transcription. It depends on Mg(2+) as a cofactor. Zn(2+) is required as a cofactor.

The catalysed reaction is RNA(n) + a ribonucleoside 5'-triphosphate = RNA(n+1) + diphosphate. DNA-dependent RNA polymerase catalyzes the transcription of DNA into RNA using the four ribonucleoside triphosphates as substrates. The sequence is that of DNA-directed RNA polymerase subunit beta' from Dehalococcoides mccartyi (strain ATCC BAA-2266 / KCTC 15142 / 195) (Dehalococcoides ethenogenes (strain 195)).